Here is a 243-residue protein sequence, read N- to C-terminus: Ubiquinone/menaquinone biosynthesis C-methyltransferase UbiE (243 aa).

S-adenosyl-L-methionine contacts are provided by residues T69, D90, and 116 to 117 (DA).

Belongs to the class I-like SAM-binding methyltransferase superfamily. MenG/UbiE family.

The enzyme catalyses a 2-demethylmenaquinol + S-adenosyl-L-methionine = a menaquinol + S-adenosyl-L-homocysteine + H(+). It catalyses the reaction a 2-methoxy-6-(all-trans-polyprenyl)benzene-1,4-diol + S-adenosyl-L-methionine = a 5-methoxy-2-methyl-3-(all-trans-polyprenyl)benzene-1,4-diol + S-adenosyl-L-homocysteine + H(+). It participates in quinol/quinone metabolism; menaquinone biosynthesis; menaquinol from 1,4-dihydroxy-2-naphthoate: step 2/2. Its pathway is cofactor biosynthesis; ubiquinone biosynthesis. Functionally, methyltransferase required for the conversion of demethylmenaquinol (DMKH2) to menaquinol (MKH2) and the conversion of 2-polyprenyl-6-methoxy-1,4-benzoquinol (DDMQH2) to 2-polyprenyl-3-methyl-6-methoxy-1,4-benzoquinol (DMQH2). The sequence is that of Ubiquinone/menaquinone biosynthesis C-methyltransferase UbiE from Burkholderia ambifaria (strain MC40-6).